The chain runs to 469 residues: Neuraminidase (469 aa).

Over 1 to 9 (MNPNQKIIT) the chain is Intravirion. Residues 10–30 (IGSVSLTIATVCFLMQIAILV) traverse the membrane as a helical segment. The interval 11–33 (GSVSLTIATVCFLMQIAILVTTV) is involved in apical transport and lipid raft association. The Virion surface segment spans residues 31–469 (TTVTLHFKQY…DGADINLMPI (439 aa)). The segment at 36–88 (HFKQYECDSPANNQVMPCEPIIIERNITEIVYLTNTTIEKEICPKLVEYRNWS) is hypervariable stalk region. Residues Asn61, Asn70, and Asn86 are each glycosylated (N-linked (GlcNAc...) asparagine; by host). Residues 91-469 (QCKITGFAPF…DGADINLMPI (379 aa)) are head of neuraminidase. Disulfide bonds link Cys92–Cys417, Cys124–Cys129, Cys183–Cys230, Cys232–Cys237, Cys278–Cys291, Cys280–Cys289, Cys318–Cys337, and Cys421–Cys447. Arg118 provides a ligand contact to substrate. Asn146 carries an N-linked (GlcNAc...) asparagine; by host glycan. Residue Asp151 is the Proton donor/acceptor of the active site. Residue Arg152 participates in substrate binding. Asn200 and Asn234 each carry an N-linked (GlcNAc...) asparagine; by host glycan. 276-277 (EE) contacts substrate. Arg292 contacts substrate. Asp293, Gly297, and Asp324 together coordinate Ca(2+). The segment at 326–350 (PRNNDRSSNSNCRNPNNERGNHGVK) is disordered. The segment covering 331–343 (RSSNSNCRNPNNE) has biased composition (low complexity). A substrate-binding site is contributed by Arg371. Residue Asn402 is glycosylated (N-linked (GlcNAc...) asparagine; by host). The Nucleophile role is filled by Tyr406.

Belongs to the glycosyl hydrolase 34 family. As to quaternary structure, homotetramer. The cofactor is Ca(2+). In terms of processing, N-glycosylated.

Its subcellular location is the virion membrane. The protein localises to the host apical cell membrane. The enzyme catalyses Hydrolysis of alpha-(2-&gt;3)-, alpha-(2-&gt;6)-, alpha-(2-&gt;8)- glycosidic linkages of terminal sialic acid residues in oligosaccharides, glycoproteins, glycolipids, colominic acid and synthetic substrates.. Inhibited by the neuraminidase inhibitors zanamivir (Relenza) and oseltamivir (Tamiflu). These drugs interfere with the release of progeny virus from infected cells and are effective against all influenza strains. Resistance to neuraminidase inhibitors is quite rare. Its function is as follows. Catalyzes the removal of terminal sialic acid residues from viral and cellular glycoconjugates. Cleaves off the terminal sialic acids on the glycosylated HA during virus budding to facilitate virus release. Additionally helps virus spread through the circulation by further removing sialic acids from the cell surface. These cleavages prevent self-aggregation and ensure the efficient spread of the progeny virus from cell to cell. Otherwise, infection would be limited to one round of replication. Described as a receptor-destroying enzyme because it cleaves a terminal sialic acid from the cellular receptors. May facilitate viral invasion of the upper airways by cleaving the sialic acid moieties on the mucin of the airway epithelial cells. Likely to plays a role in the budding process through its association with lipid rafts during intracellular transport. May additionally display a raft-association independent effect on budding. Plays a role in the determination of host range restriction on replication and virulence. Sialidase activity in late endosome/lysosome traffic seems to enhance virus replication. In Influenza A virus (strain A/Qu/7/1970 H3N2), this protein is Neuraminidase.